A 95-amino-acid chain; its full sequence is Cytosolic calcium-binding protein 3 (95 aa).

Tandem repeats lie at residues 30–35, 39–43, 54–59, 67–71, 75–79, and 90–94. The 6 X 5 AA approximate repeats of V-E-E-K-K stretch occupies residues 30-94; that stretch reads VEDAEKTNED…AEEVAVEKAK (65 aa). Residues 54–95 are disordered; it reads VEEEKKAEEVTETPEEKKTEALEEKQTEVAAAEEVAVEKAKE. Basic and acidic residues predominate over residues 55 to 80; it reads EEEKKAEEVTETPEEKKTEALEEKQT.

In terms of tissue distribution, low levels in roots (e.g. in cambium) and barely expressed in stems, shoots, flowers, siliques and leaves.

The protein localises to the cytoplasm. Its subcellular location is the cytosol. Its function is as follows. Binds calcium Ca(2+) and may act as a signal mediator to buffer Ca(2+). The protein is Cytosolic calcium-binding protein 3 of Arabidopsis thaliana (Mouse-ear cress).